Consider the following 246-residue polypeptide: 1-(5-phosphoribosyl)-5-[(5-phosphoribosylamino)methylideneamino] imidazole-4-carboxamide isomerase (246 aa).

Residue aspartate 8 is the Proton acceptor of the active site. Catalysis depends on aspartate 131, which acts as the Proton donor.

This sequence belongs to the HisA/HisF family.

It localises to the cytoplasm. The catalysed reaction is 1-(5-phospho-beta-D-ribosyl)-5-[(5-phospho-beta-D-ribosylamino)methylideneamino]imidazole-4-carboxamide = 5-[(5-phospho-1-deoxy-D-ribulos-1-ylimino)methylamino]-1-(5-phospho-beta-D-ribosyl)imidazole-4-carboxamide. It participates in amino-acid biosynthesis; L-histidine biosynthesis; L-histidine from 5-phospho-alpha-D-ribose 1-diphosphate: step 4/9. This is 1-(5-phosphoribosyl)-5-[(5-phosphoribosylamino)methylideneamino] imidazole-4-carboxamide isomerase from Bordetella petrii (strain ATCC BAA-461 / DSM 12804 / CCUG 43448).